A 122-amino-acid polypeptide reads, in one-letter code: Protein YqjC (122 aa).

The first 20 residues, 1 to 20 (MKYRIALAVSLFALSAGSYA), serve as a signal peptide directing secretion. A disordered region spans residues 65–100 (QLRADHQKKIAKQKDEVAERQQDLAEAKQKGDADKI). Over residues 66–100 (LRADHQKKIAKQKDEVAERQQDLAEAKQKGDADKI) the composition is skewed to basic and acidic residues.

The chain is Protein YqjC (yqjC) from Escherichia coli (strain K12).